We begin with the raw amino-acid sequence, 247 residues long: MSNQACFSNPGPELWNALGWHPSSEQLEQMIALQALLRQWNARVNLTRLVEGGDYWILQVFDSLWPLQSELQNAQQPRRCIDIGSGGGFPGLVLAIALPGASITLVDSVGRKTAALKAMAAKLGLTSRVTVRSERAELTGQDHCCRGLFDLAMARAVSTAPVVAEYLVPLLKPSGEALLFRGHWSPNDAKDLAKALRFLQADLIKMERRELPDNRGVRHQLRLRATLPCPATFPRPIGVPAKNPLGS.

S-adenosyl-L-methionine contacts are provided by residues G84, F89, 136–137, and R155; that span reads AE.

It belongs to the methyltransferase superfamily. RNA methyltransferase RsmG family.

The protein resides in the cytoplasm. Specifically methylates the N7 position of a guanine in 16S rRNA. The chain is Ribosomal RNA small subunit methyltransferase G from Prochlorococcus marinus (strain MIT 9303).